The sequence spans 65 residues: Large ribosomal subunit protein uL29 (65 aa).

This sequence belongs to the universal ribosomal protein uL29 family.

The protein is Large ribosomal subunit protein uL29 of Mycoplasmopsis synoviae (strain 53) (Mycoplasma synoviae).